Reading from the N-terminus, the 216-residue chain is Ras-related protein RABA1b (216 aa).

Residue 20 to 27 (GDSGVGKS) participates in GTP binding. An Effector region motif is present at residues 42–50 (SKSTIGVEF). GTP is bound by residues 68–72 (DTAGQ), 126–129 (NKSD), and 156–157 (SA). Residues cysteine 213 and cysteine 214 are each lipidated (S-geranylgeranyl cysteine).

The protein belongs to the small GTPase superfamily. Rab family.

Its subcellular location is the cell membrane. Functionally, intracellular vesicle trafficking and protein transport. This Arabidopsis thaliana (Mouse-ear cress) protein is Ras-related protein RABA1b (RABA1B).